The following is a 398-amino-acid chain: Leucine aminopeptidase 1 (398 aa).

The N-terminal stretch at 1–20 (MKFLQTSLIAAALPAALVSG) is a signal peptide. Residues 21 to 87 (RFVIENEGDN…LRAWTQSQAS (67 aa)) constitute a propeptide that is removed on maturation. A glycan (N-linked (GlcNAc...) asparagine) is linked at Asn179. Positions 187, 206, 245, and 272 each coordinate Zn(2+). Cys321 and Cys325 are disulfide-bonded. His354 contacts Zn(2+).

The protein belongs to the peptidase M28 family. M28E subfamily. Monomer. Zn(2+) is required as a cofactor.

It localises to the secreted. Its function is as follows. Extracellular aminopeptidase that allows assimilation of proteinaceous substrates. This Trichoderma harzianum (Hypocrea lixii) protein is Leucine aminopeptidase 1 (lap1).